An 86-amino-acid polypeptide reads, in one-letter code: Small ribosomal subunit protein uS17 (86 aa).

This sequence belongs to the universal ribosomal protein uS17 family. Part of the 30S ribosomal subunit.

Its function is as follows. One of the primary rRNA binding proteins, it binds specifically to the 5'-end of 16S ribosomal RNA. In Streptococcus pyogenes serotype M6 (strain ATCC BAA-946 / MGAS10394), this protein is Small ribosomal subunit protein uS17.